Consider the following 281-residue polypeptide: Transmembrane protein 41A-A (281 aa).

The signal sequence occupies residues 1 to 22; the sequence is MRSLVGLVAVIVTATFYLYSLS. The tract at residues 32–56 is disordered; sequence HKQSHEGETTDAKDGDEPSEMETAS. Positions 34–47 are enriched in basic and acidic residues; sequence QSHEGETTDAKDGD. Transmembrane regions (helical) follow at residues 84 to 104, 107 to 127, 170 to 190, 197 to 217, and 236 to 256; these read GYVLLLFCSAYLYKQAFAIPG, FLNILAGALFGTWFGLLLTCV, LFFFLLFLRFFPMSPNWFLNM, IPVTLFFMAVFIGLMPYNFIC, and WSVVLKLLLTACVALLPGALI.

It belongs to the TMEM41 family.

It is found in the membrane. This chain is Transmembrane protein 41A-A (tmem41aa), found in Danio rerio (Zebrafish).